Consider the following 347-residue polypeptide: Protein RecA (347 aa).

64–71 contacts ATP; that stretch reads GPESSGKT.

The protein belongs to the RecA family.

The protein localises to the cytoplasm. In terms of biological role, can catalyze the hydrolysis of ATP in the presence of single-stranded DNA, the ATP-dependent uptake of single-stranded DNA by duplex DNA, and the ATP-dependent hybridization of homologous single-stranded DNAs. It interacts with LexA causing its activation and leading to its autocatalytic cleavage. In Bartonella henselae (strain ATCC 49882 / DSM 28221 / CCUG 30454 / Houston 1) (Rochalimaea henselae), this protein is Protein RecA.